The following is a 691-amino-acid chain: MSKITADVLLKEGLPKSIHLKDLKKLNLSKMHLEMKDIDPKLFSQMVNLDELDISHNTLSELPDNLGLHNLRILNFADNHVEDVTVLKQFPNLEEVIYEDNIYLTVSDNYKVFCLLPKLRRLNNKDITSLANHVRFVNHRELSNRVEAHWDSKFKDNLPDKPSSQKINAVAKDFIKSVVNNIKYGPSSLKEFVRWKALGCSGKKRDSADDCTEGSPTKRTRIQHELQSIPLSPRKSNRLQNSPLSLTPIKRKQETSTQGTPSKSTETKSPKVALKSTPSKKQSNESSAKINGKQKLSLTPKIIQKALDNIEPLHFLQCHSKNNSCEDFKTQLWACAFEPILDSSSPKAVATCGGDSVCIIDCETGKVMKKYKVTGEEFFTLVWTTLTMIGKDEQKRKINVLAAGGKHGVVRIIHAKVSLCYGEIKAHKKAISIMCFSPKQDTFLFTGSYDKRIILWDIGVPDCDYNFRPSQLLTLDTTSVPLRMCLVPSCPDEFLVAACEDGCFAWDIRLDKKQGRRSYEVELNFPIYKEERKDNDFHVIDSLAFLNEDIIASKSVMQGSIYLWSWEKTLKTRKTKNVKKLDAVILAQMKWSSSETPYLVLSTSPERYCVFCGDEDGKIWIYDLDSCKADLQRGKLCSVVKEPTKILSWPILFSPKEKVEKTLINVVTVDPTMEYLVALTDINIVSIWKIK.

LRR repeat units lie at residues 22 to 45 (DLKK…LFSQ), 48 to 69 (NLDE…LGLH), and 70 to 91 (NLRI…KQFP). The tract at residues 202 to 291 (GKKRDSADDC…QSNESSAKIN (90 aa)) is disordered. Polar residues-rich tracts occupy residues 255 to 264 (TSTQGTPSKS) and 276 to 291 (STPS…AKIN). WD repeat units lie at residues 426-466 (AHKK…CDYN), 476-516 (DTTS…KQGR), 535-574 (NDFH…KTRK), 593-632 (SSET…ADLQ), and 659-691 (VEKT…WKIK).

Belongs to the LRWD1 family. In terms of assembly, component of the ORC complex.

The protein resides in the nucleus. Its subcellular location is the chromosome. It is found in the centromere. It localises to the telomere. The protein localises to the cytoplasm. The protein resides in the cytoskeleton. Its subcellular location is the microtubule organizing center. It is found in the centrosome. It localises to the kinetochore. In terms of biological role, required for G1/S transition. Recruits and stabilizes the origin recognition complex (ORC) onto chromatin during G1 to establish pre-replication complex (preRC) and to heterochromatic sites in post-replicated cells. Binds a combination of DNA and histone methylation repressive marks on heterochromatin. Required for silencing of major satellite repeats. May be important ORC2, ORC3 and ORC4 stability. This Xenopus tropicalis (Western clawed frog) protein is Leucine-rich repeat and WD repeat-containing protein 1 (lrwd1).